Consider the following 271-residue polypeptide: Orotidine 5'-phosphate decarboxylase (271 aa).

Residue Lys-95 is the Proton donor of the active site.

This sequence belongs to the OMP decarboxylase family. Type 2 subfamily.

It carries out the reaction orotidine 5'-phosphate + H(+) = UMP + CO2. It participates in pyrimidine metabolism; UMP biosynthesis via de novo pathway; UMP from orotate: step 2/2. This is Orotidine 5'-phosphate decarboxylase from Janthinobacterium sp. (strain Marseille) (Minibacterium massiliensis).